The sequence spans 49 residues: Large ribosomal subunit protein bL33A (49 aa).

Belongs to the bacterial ribosomal protein bL33 family.

The chain is Large ribosomal subunit protein bL33A from Leuconostoc mesenteroides subsp. mesenteroides (strain ATCC 8293 / DSM 20343 / BCRC 11652 / CCM 1803 / JCM 6124 / NCDO 523 / NBRC 100496 / NCIMB 8023 / NCTC 12954 / NRRL B-1118 / 37Y).